The sequence spans 190 residues: Double zinc ribbon protein MJ0416 (190 aa).

A DZANK-type zinc finger spans residues 134-183 (CPNCNNYISDSWKYCAHCGAKLKEEEEEVLRCPNCKRPVQPEWIVCPYCG).

This is Double zinc ribbon protein MJ0416 from Methanocaldococcus jannaschii (strain ATCC 43067 / DSM 2661 / JAL-1 / JCM 10045 / NBRC 100440) (Methanococcus jannaschii).